The chain runs to 356 residues: MSKLKDNPDNSLNDRLNREKAIELARVQIEKDFGKGSLIKMGESPVGKGIESISSGSILLDEAIGVGGYPRGRIIEIFGPESSGKTTLTLQAIAEVQKNGGIAAFIDAEHALDPAYAKALGVNIDELWISQPDTGEQALEIAEYLIRSGGVDLIVVDSVAALTPQAEIDGEMGDSQIGLQARLMSKALRKITGILSKSNTCIMFINQLRMKIGVMFGNPETTTGGNALKFYSSLRLEVRKIDQVTGSSADDIVGNKIRIKVVKNKVAPPFRKVELVIYFGKGISREASILDASVKYNLIQKTGSWYSMGDDKLGQGREHAVSYLVKEKEVTDELESKLRKIIFEDPNQDFLEVGTT.

Residue 79–86 (GPESSGKT) participates in ATP binding.

The protein belongs to the RecA family.

It is found in the cytoplasm. Its function is as follows. Can catalyze the hydrolysis of ATP in the presence of single-stranded DNA, the ATP-dependent uptake of single-stranded DNA by duplex DNA, and the ATP-dependent hybridization of homologous single-stranded DNAs. It interacts with LexA causing its activation and leading to its autocatalytic cleavage. This chain is Protein RecA, found in Borrelia hermsii (strain HS1 / DAH).